A 105-amino-acid chain; its full sequence is MSTKNKKAAGGNGVAPKQTRQQSHDSQDYSSFKTVLFYCMLIVFLPVLTFFVLKGFVLDQFLDISEVKVNIASAVGAVVALHIALGLYIYRAYFGAPGSKGSKTD.

The disordered stretch occupies residues 1–26 (MSTKNKKAAGGNGVAPKQTRQQSHDS). Over 1 to 36 (MSTKNKKAAGGNGVAPKQTRQQSHDSQDYSSFKTVL) the chain is Cytoplasmic. Residues 37 to 57 (FYCMLIVFLPVLTFFVLKGFV) traverse the membrane as a helical segment. Residues 58–68 (LDQFLDISEVK) are Lumenal-facing. The chain crosses the membrane as a helical span at residues 69-89 (VNIASAVGAVVALHIALGLYI). Residues 90 to 105 (YRAYFGAPGSKGSKTD) are Cytoplasmic-facing.

The protein belongs to the VMA21 family.

It is found in the endoplasmic reticulum membrane. It localises to the endoplasmic reticulum-Golgi intermediate compartment membrane. Its subcellular location is the cytoplasmic vesicle. The protein resides in the COPII-coated vesicle membrane. Required for the assembly of the V0 complex of the vacuolar ATPase (V-ATPase) in the endoplasmic reticulum. The sequence is that of Vacuolar ATPase assembly integral membrane protein VMA21 homolog from Drosophila melanogaster (Fruit fly).